Consider the following 327-residue polypeptide: Zinc transport protein ZntB (327 aa).

Topologically, residues 1–271 (MESFAGKELQ…AMNRRTYTMS (271 aa)) are cytoplasmic. A helical transmembrane segment spans residues 272–292 (LLAMVFLPTTFLTGLFGVNLG). The Periplasmic portion of the chain corresponds to 293 to 300 (GIPGGDAP). The chain crosses the membrane as a helical span at residues 301 to 321 (FGFFTFCLMLVILVGGVAWWL). At 322–327 (KRSKWL) the chain is on the cytoplasmic side.

Belongs to the CorA metal ion transporter (MIT) (TC 1.A.35) family.

The protein resides in the cell inner membrane. It carries out the reaction Zn(2+)(out) + H(+)(out) = Zn(2+)(in) + H(+)(in). In terms of biological role, zinc transporter. Acts as a Zn(2+):proton symporter, which likely mediates zinc ion uptake. This is Zinc transport protein ZntB from Pectobacterium carotovorum subsp. carotovorum (strain PC1).